A 500-amino-acid polypeptide reads, in one-letter code: MTIFDNYEVWFVIGSQHLYGPETLRQVTQHAEHVVNALNTEAKLPCKLVLKPLGTTPDEITAICRDANYDDRCAGLVVWLHTFSPAKMWINGLTMLNKPLLQFHTQFNAALPWDSIDMDFMNLNQTAHGGREFGFIGARMRQQHAVVTGHWQDKQAHERIGSWMRQAVSKQDTRHLKVCRFGDNMREVAVTDGDKVAAQIKFGFSVNTWAVGDLVQVVNSISDGDVNALVDEYESCYTMTPATQIHGEKRQNVLEAARIELGMKRFLEQGGFHAFTTTFEDLHGLKQLPGLAVQRLMQQGYGFAGEGDWKTAALLRIMKVMSTGLQGGTSFMEDYTYHFEKGNDLVLGSHMLEVCPSIAVEEKPILDVQHLGIGGKDDPARLIFNTQTGPAIVASLIDLGDRYRLLVNCIDTVKTPHSLPKLPVANALWKAQPDLPSASEAWILAGGAHHTVFSHALNLNDMRQFAEMHDIEITVIDNDTRLPAFKDALRWNEVYYGFRR.

Mn(2+) is bound by residues glutamate 306, glutamate 333, histidine 350, and histidine 450.

This sequence belongs to the arabinose isomerase family. As to quaternary structure, homohexamer. Requires Mn(2+) as cofactor.

The enzyme catalyses beta-L-arabinopyranose = L-ribulose. The protein operates within carbohydrate degradation; L-arabinose degradation via L-ribulose; D-xylulose 5-phosphate from L-arabinose (bacterial route): step 1/3. In terms of biological role, catalyzes the conversion of L-arabinose to L-ribulose. In Escherichia coli O6:H1 (strain CFT073 / ATCC 700928 / UPEC), this protein is L-arabinose isomerase.